The sequence spans 359 residues: DNA polymerase IV (359 aa).

In terms of domain architecture, UmuC spans 4 to 185 (IIHIDMDCYF…LSLRKIPGVG (182 aa)). Mg(2+)-binding residues include aspartate 8 and aspartate 103. Glutamate 104 is a catalytic residue.

This sequence belongs to the DNA polymerase type-Y family. Monomer. It depends on Mg(2+) as a cofactor.

It is found in the cytoplasm. The enzyme catalyses DNA(n) + a 2'-deoxyribonucleoside 5'-triphosphate = DNA(n+1) + diphosphate. Poorly processive, error-prone DNA polymerase involved in untargeted mutagenesis. Copies undamaged DNA at stalled replication forks, which arise in vivo from mismatched or misaligned primer ends. These misaligned primers can be extended by PolIV. Exhibits no 3'-5' exonuclease (proofreading) activity. May be involved in translesional synthesis, in conjunction with the beta clamp from PolIII. The protein is DNA polymerase IV of Shewanella sp. (strain MR-4).